The chain runs to 297 residues: Probable endonuclease 4 (297 aa).

Positions 69, 110, 145, 179, 182, 214, 227, 229, and 259 each coordinate Zn(2+).

The protein belongs to the AP endonuclease 2 family. The cofactor is Zn(2+).

It carries out the reaction Endonucleolytic cleavage to 5'-phosphooligonucleotide end-products.. Its function is as follows. Endonuclease IV plays a role in DNA repair. It cleaves phosphodiester bonds at apurinic or apyrimidinic (AP) sites, generating a 3'-hydroxyl group and a 5'-terminal sugar phosphate. The chain is Probable endonuclease 4 from Listeria monocytogenes serotype 4b (strain F2365).